The chain runs to 48 residues: AVYVASPYAAGYGYGYAYPYAAAAYRAAPVVGAYAAYPYGVATYPYYY.

Its function is as follows. Component of the cuticle of migratory locust which contains more than 100 different structural proteins. The sequence is that of Cuticle protein 5.1 from Locusta migratoria (Migratory locust).